The chain runs to 372 residues: DNA-directed RNA polymerase subunit alpha (372 aa).

The alpha N-terminal domain (alpha-NTD) stretch occupies residues 1–268 (MIFDEDSNSI…DQFQPFINFD (268 aa)). Positions 280-372 (KDTLPYDSNL…ESLSKQYSEE (93 aa)) are alpha C-terminal domain (alpha-CTD).

This sequence belongs to the RNA polymerase alpha chain family. As to quaternary structure, homodimer. The RNAP catalytic core consists of 2 alpha, 1 beta, 1 beta' and 1 omega subunit. When a sigma factor is associated with the core the holoenzyme is formed, which can initiate transcription.

It carries out the reaction RNA(n) + a ribonucleoside 5'-triphosphate = RNA(n+1) + diphosphate. In terms of biological role, DNA-dependent RNA polymerase catalyzes the transcription of DNA into RNA using the four ribonucleoside triphosphates as substrates. The polypeptide is DNA-directed RNA polymerase subunit alpha (Ehrlichia chaffeensis (strain ATCC CRL-10679 / Arkansas)).